Consider the following 240-residue polypeptide: Peptidyl-tRNA hydrolase (240 aa).

Tyr-14 lines the tRNA pocket. The active-site Proton acceptor is His-19. Residues Tyr-64, Asn-66, and Asn-112 each contribute to the tRNA site. A compositionally biased stretch (basic and acidic residues) spans 190–204 (KADEEKPRKDSEKKP). The disordered stretch occupies residues 190-240 (KADEEKPRKDSEKKPAGQSHIRQARNNNQPKLPATGPMADMLKKMFGNKGE). Over residues 209-219 (HIRQARNNNQP) the composition is skewed to polar residues.

The protein belongs to the PTH family. As to quaternary structure, monomer.

The protein localises to the cytoplasm. It carries out the reaction an N-acyl-L-alpha-aminoacyl-tRNA + H2O = an N-acyl-L-amino acid + a tRNA + H(+). Its function is as follows. Hydrolyzes ribosome-free peptidyl-tRNAs (with 1 or more amino acids incorporated), which drop off the ribosome during protein synthesis, or as a result of ribosome stalling. Functionally, catalyzes the release of premature peptidyl moieties from peptidyl-tRNA molecules trapped in stalled 50S ribosomal subunits, and thus maintains levels of free tRNAs and 50S ribosomes. This Rhizobium etli (strain ATCC 51251 / DSM 11541 / JCM 21823 / NBRC 15573 / CFN 42) protein is Peptidyl-tRNA hydrolase.